The chain runs to 136 residues: Preprocaerulein type I' (136 aa).

The first 26 residues, 1-26 (MFKGILLCVLFAVLSANPLSQPEGFA), serve as a signal peptide directing secretion. Positions 27–136 (DEERDVRGLA…NALGGAPQQR (110 aa)) are excised as a propeptide. The tract at residues 82–101 (GAPQQREANDERRFADDEDD) is disordered.

It belongs to the gastrin/cholecystokinin family. Expressed by the skin glands.

It localises to the secreted. Its function is as follows. The pharmacological activities of caerulein are quite similar to the physiological activities of gastrin and related peptides. The sequence is that of Preprocaerulein type I' from Xenopus laevis (African clawed frog).